Reading from the N-terminus, the 209-residue chain is MDWGNVTVDDLFDALREVDWSSPPRPPSEFFSRFTVPKSVPKWDSRLKCNLYYYRTNYFIMIVVILGLGVLTRPLAIFAALLTALSLAFLNDSFAGSFSEKATRTVRRFSPQLAAKMRPPLTPVTRGRPSSKRAIHVCGQPRWVFVLTCSLVSFALWYISSGLLRVSVALLIAHLATILHASLRTPNLKARFNTFREEFRAVWRNYSEI.

A run of 4 helical transmembrane segments spans residues 51–73 (LYYY…VLTR), 77–99 (IFAA…GSFS), 144–164 (VFVL…SGLL), and 166–186 (VSVA…LRTP).

It belongs to the PRA1 family.

The protein localises to the endoplasmic reticulum membrane. In terms of biological role, may be involved in both secretory and endocytic intracellular trafficking in the endosomal/prevacuolar compartments. The polypeptide is PRA1 family protein A1 (PRA1A1) (Arabidopsis thaliana (Mouse-ear cress)).